We begin with the raw amino-acid sequence, 188 residues long: Ribosome-recycling factor (188 aa).

The protein belongs to the RRF family.

The protein localises to the cytoplasm. In terms of biological role, responsible for the release of ribosomes from messenger RNA at the termination of protein biosynthesis. May increase the efficiency of translation by recycling ribosomes from one round of translation to another. This is Ribosome-recycling factor from Bradyrhizobium diazoefficiens (strain JCM 10833 / BCRC 13528 / IAM 13628 / NBRC 14792 / USDA 110).